Here is a 384-residue protein sequence, read N- to C-terminus: Urotensin-2 receptor (384 aa).

Residues M1 to I54 lie on the Extracellular side of the membrane. N-linked (GlcNAc...) asparagine glycosylation is found at N29 and N33. Residues G55 to C77 traverse the membrane as a helical segment. Over R78–Y87 the chain is Cytoplasmic. A helical membrane pass occupies residues V88 to T113. Topologically, residues K114–R124 are extracellular. C123 and C199 are oxidised to a cystine. The chain crosses the membrane as a helical span at residues V125–R146. The Cytoplasmic segment spans residues E147–K167. The helical transmembrane segment at V168–L186 threads the bilayer. At A187–R209 the chain is on the extracellular side. A helical membrane pass occupies residues A210–V232. Residues R233–Y259 lie on the Cytoplasmic side of the membrane. The helical transmembrane segment at L260–R285 threads the bilayer. The Extracellular segment spans residues G286–N299. The helical transmembrane segment at Y300–L320 threads the bilayer. Residues T321–V384 lie on the Cytoplasmic side of the membrane.

It belongs to the G-protein coupled receptor 1 family. As to expression, expressed in neural tissue, including sensory epithelia.

It localises to the cell membrane. Its function is as follows. High affinity receptor for urotensin-2 and urotensin-2B. The activity of this receptor is mediated by a G-protein that activate a phosphatidylinositol-calcium second messenger system. This is Urotensin-2 receptor (UTS2R) from Bos taurus (Bovine).